The chain runs to 141 residues: Chorion protein S16 (141 aa).

An N-terminal signal peptide occupies residues 1-22; it reads MSANNMRLLCLLLACYISAIVA.

Belongs to the chorion protein S16 family.

Its subcellular location is the secreted. In terms of biological role, chorion membrane (egg shell) protein; plays a role in protecting the egg from the environment. The sequence is that of Chorion protein S16 (Cp16) from Drosophila subobscura (Fruit fly).